Consider the following 243-residue polypeptide: MADLLLGVNIDHIATLRNARGTIYPDPVQAAFIAEQAGADGITVHLREDRRHITDRDVRILRQTIQTRMNLEMAVTDEMVDIACDIKPHFCCLVPEKRQEVTTEGGLDVAGQVDKMTLAVGRLADVGILVSLFIDADFRQIDAAVAAGAPYIEIHTGAYADASTVLERQAELMRIAKAATYAAGKGLKVNAGHGLTYHNVQPIAALPEMHELNIGHAIIGQAVMTGLAAAVTDMKVLMREARR.

Asn9 provides a ligand contact to 3-amino-2-oxopropyl phosphate. Position 11-12 (11-12) interacts with 1-deoxy-D-xylulose 5-phosphate; it reads DH. Arg20 is a binding site for 3-amino-2-oxopropyl phosphate. His45 functions as the Proton acceptor in the catalytic mechanism. 1-deoxy-D-xylulose 5-phosphate is bound by residues Arg47 and His52. The active-site Proton acceptor is the Glu72. Thr102 serves as a coordination point for 1-deoxy-D-xylulose 5-phosphate. The active-site Proton donor is the His193. 3-amino-2-oxopropyl phosphate is bound by residues Gly194 and 215 to 216; that span reads GH.

It belongs to the PNP synthase family. As to quaternary structure, homooctamer; tetramer of dimers.

The protein resides in the cytoplasm. It carries out the reaction 3-amino-2-oxopropyl phosphate + 1-deoxy-D-xylulose 5-phosphate = pyridoxine 5'-phosphate + phosphate + 2 H2O + H(+). It functions in the pathway cofactor biosynthesis; pyridoxine 5'-phosphate biosynthesis; pyridoxine 5'-phosphate from D-erythrose 4-phosphate: step 5/5. In terms of biological role, catalyzes the complicated ring closure reaction between the two acyclic compounds 1-deoxy-D-xylulose-5-phosphate (DXP) and 3-amino-2-oxopropyl phosphate (1-amino-acetone-3-phosphate or AAP) to form pyridoxine 5'-phosphate (PNP) and inorganic phosphate. The protein is Pyridoxine 5'-phosphate synthase of Yersinia pestis.